We begin with the raw amino-acid sequence, 334 residues long: Aspartate carbamoyltransferase catalytic subunit (334 aa).

2 residues coordinate carbamoyl phosphate: Arg-71 and Thr-72. Residue Lys-99 coordinates L-aspartate. Carbamoyl phosphate-binding residues include Arg-121, His-151, and Gln-154. Arg-184 and Arg-239 together coordinate L-aspartate. Positions 280 and 281 each coordinate carbamoyl phosphate.

This sequence belongs to the aspartate/ornithine carbamoyltransferase superfamily. ATCase family. In terms of assembly, heterododecamer (2C3:3R2) of six catalytic PyrB chains organized as two trimers (C3), and six regulatory PyrI chains organized as three dimers (R2).

The catalysed reaction is carbamoyl phosphate + L-aspartate = N-carbamoyl-L-aspartate + phosphate + H(+). It participates in pyrimidine metabolism; UMP biosynthesis via de novo pathway; (S)-dihydroorotate from bicarbonate: step 2/3. Catalyzes the condensation of carbamoyl phosphate and aspartate to form carbamoyl aspartate and inorganic phosphate, the committed step in the de novo pyrimidine nucleotide biosynthesis pathway. This is Aspartate carbamoyltransferase catalytic subunit from Pseudomonas fluorescens (strain ATCC BAA-477 / NRRL B-23932 / Pf-5).